The primary structure comprises 550 residues: Transcription factor p65 (550 aa).

M1 bears the N-acetylmethionine mark. An RHD domain is found at 16–190 (ASGPYVEIIE…HPIFDNRAPN (175 aa)). K37 is covalently cross-linked (Glycyl lysine isopeptide (Lys-Gly) (interchain with G-Cter in SUMO3)). C38 carries the post-translational modification Cysteine persulfide; alternate. C38 bears the S-nitrosocysteine; alternate mark. An N6-acetyllysine mark is found at K122, K123, K218, and K221. Residues K122 and K123 each participate in a glycyl lysine isopeptide (Lys-Gly) (interchain with G-Cter in SUMO3); alternate cross-link. T254 is modified (phosphothreonine). S276 and S281 each carry phosphoserine. The Nuclear localization signal motif lies at 301-304 (KRKR). K310 bears the N6-acetyllysine; alternate mark. K310 carries the N6-methyllysine modification. S311 is modified (phosphoserine). Transcriptional activation domain regions lie at residues 342–388 (PKPA…APVL) and 414–476 (PGPP…EFQQ). Phosphothreonine is present on T434. At S468 the chain carries Phosphoserine. T505 is subject to Phosphothreonine. The tract at residues 520 to 550 (TSGLPNGLSGDEDFSSIADMDFSALLSQISS) is transcriptional activation domain 2. S535 is modified (phosphoserine). Positions 535–543 (SIADMDFSA) match the 9aaTAD motif.

As to quaternary structure, component of the NF-kappa-B p65-p50 complex. Component of the NF-kappa-B p65-c-Rel complex. Homodimer; component of the NF-kappa-B p65-p65 complex. Component of the NF-kappa-B p65-p52 complex. May interact with ETHE1. Binds TLE5 and TLE1. Interacts with TP53BP2. Binds to and is phosphorylated by the activated form of either RPS6KA4 or RPS6KA5. Interacts with ING4 and this interaction may be indirect. Interacts with CARM1, USP48 and UNC5CL. Interacts with IRAK1BP1. Interacts with NFKBID. Interacts with NFKBIA. Interacts with GSK3B. Interacts with NFKBIB. Interacts with NFKBIE. Interacts with NFKBIZ. Interacts with EHMT1 (via ANK repeats). Part of a 70-90 kDa complex at least consisting of CHUK, IKBKB, NFKBIA, RELA, ELP1 and MAP3K14. Interacts with HDAC3; HDAC3 mediates the deacetylation of RELA. Interacts with HDAC1; the interaction requires non-phosphorylated RELA. Interacts with CBP; the interaction requires phosphorylated RELA. Interacts (phosphorylated at 'Thr-254') with PIN1; the interaction inhibits p65 binding to NFKBIA. Interacts with SOCS1. Interacts with UXT. Interacts with MTDH and PHF11. Interacts with ARRB2. Interacts with NFKBIA (when phosphorylated), the interaction is direct; phosphorylated NFKBIA is part of a SCF(BTRC)-like complex lacking CUL1. Interacts with RNF25. Interacts (via C-terminus) with DDX1. Interacts with UFL1 and COMMD1. Interacts with BRMS1; this promotes deacetylation of 'Lys-310'. Interacts with NOTCH2. Directly interacts with MEN1; this interaction represses NFKB-mediated transactivation. Interacts with AKIP1, which promotes the phosphorylation and nuclear retention of RELA. Interacts (via the RHD) with GFI1; the interaction, after bacterial lipopolysaccharide (LPS) stimulation, inhibits the transcriptional activity by interfering with the DNA-binding activity to target gene promoter DNA. Interacts (when acetylated at Lys-310) with BRD4; leading to activation of the NF-kappa-B pathway. Interacts with MEFV. Interacts with CLOCK. Interacts (via N-terminus) with CPEN1; this interaction induces proteolytic cleavage of p65/RELA subunit and inhibition of NF-kappa-B transcriptional activity. Interacts with FOXP3. Interacts with CDK5RAP3; stimulates the interaction of RELA with HDAC1, HDAC2 and HDAC3 thereby inhibiting NF-kappa-B transcriptional activity. Interacts with DHX9; this interaction is direct and activates NF-kappa-B-mediated transcription. Interacts with LRRC25. Interacts with TBX21. Interacts with KAT2A. Interacts with ZBTB7A; involved in the control by RELA of the accessibility of target gene promoters. Directly interacts with DDX3X; this interaction may trap RELA in the cytoplasm, impairing nuclear relocalization upon TNF activating signals. Interacts with PHF2. Interacts with MKRN2; the interaction leads to its polyubiquitination and proteasome-dependent degradation. Interacts with ECSIT. Interacts with RAB28; the interaction contributes to RELA transport from cytoplasm to nucleus. Post-translationally, ubiquitinated by RNF182, leading to its proteasomal degradation. Degradation is required for termination of NF-kappa-B response. Polyubiquitinated via 'Lys-29'-linked ubiquitin; leading to lysosomal degradation. In terms of processing, monomethylated at Lys-310 by SETD6. Monomethylation at Lys-310 is recognized by the ANK repeats of EHMT1 and promotes the formation of repressed chromatin at target genes, leading to down-regulation of NF-kappa-B transcription factor activity. Phosphorylation at Ser-311 disrupts the interaction with EHMT1 without preventing monomethylation at Lys-310 and relieves the repression of target genes. Phosphorylation at Ser-311 disrupts the interaction with EHMT1 and promotes transcription factor activity. Phosphorylation on Ser-535 stimulates acetylation on Lys-310 and interaction with CBP; the phosphorylated and acetylated forms show enhanced transcriptional activity. Phosphorylation at Ser-276 by RPS6KA4 and RPS6KA5 promotes its transactivation and transcriptional activities. Post-translationally, phosphorylation at Ser-75 by herpes simplex virus 1/HHV-1 inhibits NF-kappa-B activation. In terms of processing, reversibly acetylated; the acetylation seems to be mediated by CBP, the deacetylation by HDAC3 and SIRT2. Acetylation at Lys-122 enhances DNA binding and impairs association with NFKBIA. Acetylation at Lys-310 is required for full transcriptional activity in the absence of effects on DNA binding and NFKBIA association. Acetylation at Lys-310 promotes interaction with BRD4. Acetylation can also lower DNA-binding and results in nuclear export. Interaction with BRMS1 promotes deacetylation of Lys-310. Lys-310 is deacetylated by SIRT2. S-nitrosylation of Cys-38 inactivates the enzyme activity. Post-translationally, sulfhydration at Cys-38 mediates the anti-apoptotic activity by promoting the interaction with RPS3 and activating the transcription factor activity. In terms of processing, sumoylation by PIAS3 negatively regulates DNA-bound activated NF-kappa-B. Proteolytically cleaved within a conserved N-terminus region required for base-specific contact with DNA in a CPEN1-mediated manner, and hence inhibits NF-kappa-B transcriptional activity.

Its subcellular location is the nucleus. It localises to the cytoplasm. NF-kappa-B is a pleiotropic transcription factor present in almost all cell types and is the endpoint of a series of signal transduction events that are initiated by a vast array of stimuli related to many biological processes such as inflammation, immunity, differentiation, cell growth, tumorigenesis and apoptosis. NF-kappa-B is a homo- or heterodimeric complex formed by the Rel-like domain-containing proteins RELA/p65, RELB, NFKB1/p105, NFKB1/p50, REL and NFKB2/p52. The heterodimeric RELA-NFKB1 complex appears to be most abundant one. The dimers bind at kappa-B sites in the DNA of their target genes and the individual dimers have distinct preferences for different kappa-B sites that they can bind with distinguishable affinity and specificity. Different dimer combinations act as transcriptional activators or repressors, respectively. The NF-kappa-B heterodimeric RELA-NFKB1 and RELA-REL complexes, for instance, function as transcriptional activators. NF-kappa-B is controlled by various mechanisms of post-translational modification and subcellular compartmentalization as well as by interactions with other cofactors or corepressors. NF-kappa-B complexes are held in the cytoplasm in an inactive state complexed with members of the NF-kappa-B inhibitor (I-kappa-B) family. In a conventional activation pathway, I-kappa-B is phosphorylated by I-kappa-B kinases (IKKs) in response to different activators, subsequently degraded thus liberating the active NF-kappa-B complex which translocates to the nucleus. The inhibitory effect of I-kappa-B on NF-kappa-B through retention in the cytoplasm is exerted primarily through the interaction with RELA. RELA shows a weak DNA-binding site which could contribute directly to DNA binding in the NF-kappa-B complex. Besides its activity as a direct transcriptional activator, it is also able to modulate promoters accessibility to transcription factors and thereby indirectly regulate gene expression. Associates with chromatin at the NF-kappa-B promoter region via association with DDX1. Essential for cytokine gene expression in T-cells. The NF-kappa-B homodimeric RELA-RELA complex appears to be involved in invasin-mediated activation of IL-8 expression. Key transcription factor regulating the IFN response during SARS-CoV-2 infection. This Rattus norvegicus (Rat) protein is Transcription factor p65.